A 322-amino-acid chain; its full sequence is Solute carrier family 25 member 16 (322 aa).

3 Solcar repeats span residues 34 to 120, 128 to 219, and 241 to 322; these read FYWL…YKTF, SGHV…LKSV, and LKTH…AVAF.

It belongs to the mitochondrial carrier (TC 2.A.29) family.

Its subcellular location is the mitochondrion inner membrane. May be involved in the transport of coenzyme A in the mitochondrial matrix. Very little is known about the physiological function of this carrier. This is Solute carrier family 25 member 16 from Rattus norvegicus (Rat).